The chain runs to 155 residues: 6,7-dimethyl-8-ribityllumazine synthase (155 aa).

Residues F24, 58 to 60 (AFE), and 82 to 84 (VLI) each bind 5-amino-6-(D-ribitylamino)uracil. 87–88 (AT) is a (2S)-2-hydroxy-3-oxobutyl phosphate binding site. H90 serves as the catalytic Proton donor. F115 serves as a coordination point for 5-amino-6-(D-ribitylamino)uracil. Position 129 (R129) interacts with (2S)-2-hydroxy-3-oxobutyl phosphate.

The protein belongs to the DMRL synthase family.

It carries out the reaction (2S)-2-hydroxy-3-oxobutyl phosphate + 5-amino-6-(D-ribitylamino)uracil = 6,7-dimethyl-8-(1-D-ribityl)lumazine + phosphate + 2 H2O + H(+). It functions in the pathway cofactor biosynthesis; riboflavin biosynthesis; riboflavin from 2-hydroxy-3-oxobutyl phosphate and 5-amino-6-(D-ribitylamino)uracil: step 1/2. In terms of biological role, catalyzes the formation of 6,7-dimethyl-8-ribityllumazine by condensation of 5-amino-6-(D-ribitylamino)uracil with 3,4-dihydroxy-2-butanone 4-phosphate. This is the penultimate step in the biosynthesis of riboflavin. This chain is 6,7-dimethyl-8-ribityllumazine synthase, found in Chloroherpeton thalassium (strain ATCC 35110 / GB-78).